Here is a 546-residue protein sequence, read N- to C-terminus: MTKYIFVTGGVVSSLGKGIAAASIAAILESRGLKVTMLKLDPYINVDPGTMSPFQHGEVFVTEDGAETDLDLGHYERFIHAKMKKSNNFTTGQVYESVITKERRGDYLGGTVQVIPHITDEIKLKMGEGAADADVAIVEIGGTVGDIESLPFLEAIRQMRSNHGRKNTLYVHLSYVPYIATAGEIKTKPTQHSVKELREIGIQPDILLCRMDRELPEDEKRKIALFCNVEENAVIGCYDSDSIYKVPGMLHAQGIDDIIAEQLQLDLPQADLSAWDRIIDAIEKPDHAIKIAMVGKYVDLTESYKSLTEALKHAGIHTRTKVDIIYVDSEEIERDGAESLRDMDAILVPGGFGKRGVEGKIKAVKFARENDIPYLGICLGMQIALIEYARDVAGMAGANSTEFDLDTNFPVVALIDEWVNHDGKIEKRDENSNMGGTMRLGGQQCDLVPGSLAARVYGSTEITERHRHRYEVNNYYIQRLEQAGLTISGRSAGHEKLVETIELTGHRWFFACQFHPEFTSTPRDGHPLFIAYVKAALAHQADKQAS.

The segment at 1 to 265 (MTKYIFVTGG…DDIIAEQLQL (265 aa)) is amidoligase domain. Residue serine 13 participates in CTP binding. Serine 13 contributes to the UTP binding site. Residues 14 to 19 (SLGKGI) and aspartate 71 contribute to the ATP site. Residues aspartate 71 and glutamate 139 each coordinate Mg(2+). CTP contacts are provided by residues 146–148 (DIE), 186–191 (KTKPTQ), and lysine 222. UTP contacts are provided by residues 186 to 191 (KTKPTQ) and lysine 222. A Glutamine amidotransferase type-1 domain is found at 290-542 (KIAMVGKYVD…VKAALAHQAD (253 aa)). Residue glycine 351 coordinates L-glutamine. Catalysis depends on cysteine 378, which acts as the Nucleophile; for glutamine hydrolysis. Residues 379–382 (LGMQ), glutamate 402, and arginine 469 contribute to the L-glutamine site. Catalysis depends on residues histidine 515 and glutamate 517.

The protein belongs to the CTP synthase family. As to quaternary structure, homotetramer.

The enzyme catalyses UTP + L-glutamine + ATP + H2O = CTP + L-glutamate + ADP + phosphate + 2 H(+). It carries out the reaction L-glutamine + H2O = L-glutamate + NH4(+). The catalysed reaction is UTP + NH4(+) + ATP = CTP + ADP + phosphate + 2 H(+). The protein operates within pyrimidine metabolism; CTP biosynthesis via de novo pathway; CTP from UDP: step 2/2. Allosterically activated by GTP, when glutamine is the substrate; GTP has no effect on the reaction when ammonia is the substrate. The allosteric effector GTP functions by stabilizing the protein conformation that binds the tetrahedral intermediate(s) formed during glutamine hydrolysis. Inhibited by the product CTP, via allosteric rather than competitive inhibition. Functionally, catalyzes the ATP-dependent amination of UTP to CTP with either L-glutamine or ammonia as the source of nitrogen. Regulates intracellular CTP levels through interactions with the four ribonucleotide triphosphates. The chain is CTP synthase from Chromobacterium violaceum (strain ATCC 12472 / DSM 30191 / JCM 1249 / CCUG 213 / NBRC 12614 / NCIMB 9131 / NCTC 9757 / MK).